Here is a 67-residue protein sequence, read N- to C-terminus: MPKMKTKSSAKKRFRVRPGGTVKRGQAFKRHILTKKTTKNKRHLRGTVAVHETNMGHIAQMLPFAGL.

It belongs to the bacterial ribosomal protein bL35 family.

This is Large ribosomal subunit protein bL35 from Leptothrix cholodnii (strain ATCC 51168 / LMG 8142 / SP-6) (Leptothrix discophora (strain SP-6)).